The sequence spans 255 residues: Phosphatidylglycerol--prolipoprotein diacylglyceryl transferase (255 aa).

3 helical membrane-spanning segments follow: residues 15–35 (WYGIMIALGVLAALILANLNC), 46–66 (IDVFLISFPLAIIGARVYYVV), and 84–104 (LGGLAIHGGIIFGLGAAYIVS). Position 130 (Arg130) interacts with a 1,2-diacyl-sn-glycero-3-phospho-(1'-sn-glycerol). A run of 3 helical transmembrane segments spans residues 169–189 (PTFLYESLWDLIVCIILVYIF), 196–216 (GTVICTYVGLYSLGRFFIEGL), and 228–248 (VAQLVSFIGIVLSISFFVYLK).

The protein belongs to the Lgt family.

Its subcellular location is the cell membrane. The catalysed reaction is L-cysteinyl-[prolipoprotein] + a 1,2-diacyl-sn-glycero-3-phospho-(1'-sn-glycerol) = an S-1,2-diacyl-sn-glyceryl-L-cysteinyl-[prolipoprotein] + sn-glycerol 1-phosphate + H(+). Its pathway is protein modification; lipoprotein biosynthesis (diacylglyceryl transfer). Its function is as follows. Catalyzes the transfer of the diacylglyceryl group from phosphatidylglycerol to the sulfhydryl group of the N-terminal cysteine of a prolipoprotein, the first step in the formation of mature lipoproteins. This is Phosphatidylglycerol--prolipoprotein diacylglyceryl transferase from Clostridium kluyveri (strain NBRC 12016).